The chain runs to 450 residues: 3-phosphoshikimate 1-carboxyvinyltransferase (450 aa).

3 residues coordinate 3-phosphoshikimate: K28, S29, and R33. K28 is a binding site for phosphoenolpyruvate. Positions 100 and 128 each coordinate phosphoenolpyruvate. The 3-phosphoshikimate site is built by S173, Q175, D326, and K353. A phosphoenolpyruvate-binding site is contributed by Q175. D326 functions as the Proton acceptor in the catalytic mechanism. The phosphoenolpyruvate site is built by R357 and R402.

This sequence belongs to the EPSP synthase family. In terms of assembly, monomer.

Its subcellular location is the cytoplasm. The catalysed reaction is 3-phosphoshikimate + phosphoenolpyruvate = 5-O-(1-carboxyvinyl)-3-phosphoshikimate + phosphate. Its pathway is metabolic intermediate biosynthesis; chorismate biosynthesis; chorismate from D-erythrose 4-phosphate and phosphoenolpyruvate: step 6/7. Catalyzes the transfer of the enolpyruvyl moiety of phosphoenolpyruvate (PEP) to the 5-hydroxyl of shikimate-3-phosphate (S3P) to produce enolpyruvyl shikimate-3-phosphate and inorganic phosphate. This chain is 3-phosphoshikimate 1-carboxyvinyltransferase, found in Brucella melitensis biotype 1 (strain ATCC 23456 / CCUG 17765 / NCTC 10094 / 16M).